Consider the following 432-residue polypeptide: Phosphomethylpyrimidine synthase (432 aa).

Residues Asn66, Met95, Tyr124, His163, 185–187 (SRG), 226–229 (DGLR), and Glu265 each bind substrate. A Zn(2+)-binding site is contributed by His269. Tyr292 serves as a coordination point for substrate. His333 is a binding site for Zn(2+). [4Fe-4S] cluster contacts are provided by Cys409, Cys412, and Cys416.

It belongs to the ThiC family. Requires [4Fe-4S] cluster as cofactor.

It carries out the reaction 5-amino-1-(5-phospho-beta-D-ribosyl)imidazole + S-adenosyl-L-methionine = 4-amino-2-methyl-5-(phosphooxymethyl)pyrimidine + CO + 5'-deoxyadenosine + formate + L-methionine + 3 H(+). It participates in cofactor biosynthesis; thiamine diphosphate biosynthesis. Functionally, catalyzes the synthesis of the hydroxymethylpyrimidine phosphate (HMP-P) moiety of thiamine from aminoimidazole ribotide (AIR) in a radical S-adenosyl-L-methionine (SAM)-dependent reaction. The protein is Phosphomethylpyrimidine synthase of Thermoanaerobacter pseudethanolicus (strain ATCC 33223 / 39E) (Clostridium thermohydrosulfuricum).